The primary structure comprises 224 residues: tRNA (guanine-N(7)-)-methyltransferase (224 aa).

Positions 56, 81, 108, and 131 each coordinate S-adenosyl-L-methionine. Residue Asp131 is part of the active site. Residues Lys135, Asp167, and 202–205 each bind substrate; that span reads TKFE.

The protein belongs to the class I-like SAM-binding methyltransferase superfamily. TrmB family.

It carries out the reaction guanosine(46) in tRNA + S-adenosyl-L-methionine = N(7)-methylguanosine(46) in tRNA + S-adenosyl-L-homocysteine. The protein operates within tRNA modification; N(7)-methylguanine-tRNA biosynthesis. Catalyzes the formation of N(7)-methylguanine at position 46 (m7G46) in tRNA. The sequence is that of tRNA (guanine-N(7)-)-methyltransferase from Nitrosomonas europaea (strain ATCC 19718 / CIP 103999 / KCTC 2705 / NBRC 14298).